A 414-amino-acid chain; its full sequence is Tar DNA-binding protein homolog 1 (414 aa).

Composition is skewed to basic and acidic residues over residues 1 to 44 (MADE…KTTD) and 153 to 167 (DDGR…RAVE). Disordered stretches follow at residues 1–58 (MADE…GDEP) and 132–167 (SSAD…RAVE). 2 consecutive RRM domains span residues 173-259 (VDLI…QGRP) and 262-341 (SRIF…IAQP). Residues 343–414 (EENNQSVGPD…APGDSRGPGW (72 aa)) are disordered. The segment covering 361–373 (NRRERDRPDRRPI) has biased composition (basic and acidic residues).

In terms of assembly, interacts with chromobox protein homolog hpl-2; interaction may maintain localization of hpl-2 to gene bodies. Widely expressed in a range of tissues including body wall muscles, pharynx and neurons of the midbody in adults and larvae.

It localises to the nucleus. Its subcellular location is the cytoplasm. Its function is as follows. RNA-binding protein which regulates transcription, splicing and RNA-editing. Limits the accumulation of double-stranded RNA by maintaining the abundance of the mature RNA transcripts that are formed from double-stranded precursor RNAs. Stress response protein that acts downstream of daf-16 in the insulin/IGF pathway to regulate longevity and the cellular stress response to osmotic, oxidative, proteotoxic and endoplasmic reticulum stress. Involved in the regulation of physiological processes including aging, fertility, growth and locomotion. Plays a role in maintaining localization of chromobox protein homolog hpl-2 to gene bodies, perhaps acting via binding to nascent RNA transcripts. This chain is Tar DNA-binding protein homolog 1, found in Caenorhabditis elegans.